The primary structure comprises 122 residues: Succinate dehydrogenase assembly factor 3, mitochondrial (122 aa).

The N-terminal 47 residues, 1–47, are a transit peptide targeting the mitochondrion; the sequence is MHPSVVRLVKPRRPERITSPILPPLPLYRAILRAHHRKLPQELRYLG.

It belongs to the complex I LYR family. SDHAF3 subfamily. In terms of assembly, interacts with the iron-sulfur protein subunit within the SDH catalytic dimer.

The protein localises to the mitochondrion matrix. Its function is as follows. Plays an essential role in the assembly of succinate dehydrogenase (SDH), an enzyme complex (also referred to as respiratory complex II) that is a component of both the tricarboxylic acid (TCA) cycle and the mitochondrial electron transport chain, and which couples the oxidation of succinate to fumarate with the reduction of ubiquinone (coenzyme Q) to ubiquinol. Promotes maturation of the iron-sulfur protein subunit of the SDH catalytic dimer, protecting it from the deleterious effects of oxidants. May act together with SDHAF1. The sequence is that of Succinate dehydrogenase assembly factor 3, mitochondrial from Candida albicans (strain SC5314 / ATCC MYA-2876) (Yeast).